The primary structure comprises 432 residues: Tryptophan--tRNA ligase (432 aa).

Residues 13 to 15 (TTS) and 21 to 22 (GN) contribute to the ATP site. Residues 14 to 22 (TSGTPHLGN) carry the 'HIGH' region motif. Aspartate 146 lines the L-tryptophan pocket. ATP is bound by residues 158–160 (GRD), leucine 198, and 205–209 (KMSKS). The short motif at 205 to 209 (KMSKS) is the 'KMSKS' region element.

It belongs to the class-I aminoacyl-tRNA synthetase family. Homodimer.

Its subcellular location is the cytoplasm. It carries out the reaction tRNA(Trp) + L-tryptophan + ATP = L-tryptophyl-tRNA(Trp) + AMP + diphosphate + H(+). Functionally, catalyzes the attachment of tryptophan to tRNA(Trp). The protein is Tryptophan--tRNA ligase of Xanthomonas axonopodis pv. citri (strain 306).